The chain runs to 266 residues: Protein phosphatase 1 regulatory subunit 35 (266 aa).

Residues 1 to 10 show a composition bias toward polar residues; the sequence is MMVYNGSQLE. The tract at residues 1–118 is disordered; sequence MMVYNGSQLE…QDLGTPVQQS (118 aa). Residues 21–38 show a composition bias toward pro residues; that stretch reads PGPPPEPRAPEPGAPVPE. 2 positions are modified to phosphoserine: serine 46 and serine 51. Over residues 62-79 the composition is skewed to basic residues; sequence GRRKGRADRRGGARKGRQ. Residues 86-97 are compositionally biased toward pro residues; that stretch reads PPSPVRSGPPPA.

The protein belongs to the PPP1R35 family. As to quaternary structure, interacts with PPP1CA; this interaction mediates the PPP1CA phosphatase activity inhibition. Interacts with RTTN; this interaction allows the mutual recruitment to the centriole.

The protein localises to the cytoplasm. It localises to the cytoskeleton. The protein resides in the microtubule organizing center. It is found in the centrosome. Its subcellular location is the centriole. Functionally, during centriole duplication, plays a role in the centriole elongation by promoting the recruitment of the microtubule-binding elongation machinery through its interaction with RTTN, leading to the centriole to centrosome conversion. In addition may play a role in the primary cilia assembly. The chain is Protein phosphatase 1 regulatory subunit 35 from Bos taurus (Bovine).